A 249-amino-acid chain; its full sequence is Sugar fermentation stimulation protein homolog (249 aa).

This sequence belongs to the SfsA family.

This is Sugar fermentation stimulation protein homolog from Synechococcus sp. (strain CC9902).